The following is a 319-amino-acid chain: Beta-ketoacyl-[acyl-carrier-protein] synthase III (319 aa).

Residues Cys114 and His246 contribute to the active site. The segment at 247–251 (QANIR) is ACP-binding. Residue Asn276 is part of the active site.

Belongs to the thiolase-like superfamily. FabH family. As to quaternary structure, homodimer.

It is found in the cytoplasm. The enzyme catalyses malonyl-[ACP] + acetyl-CoA + H(+) = 3-oxobutanoyl-[ACP] + CO2 + CoA. The protein operates within lipid metabolism; fatty acid biosynthesis. In terms of biological role, catalyzes the condensation reaction of fatty acid synthesis by the addition to an acyl acceptor of two carbons from malonyl-ACP. Catalyzes the first condensation reaction which initiates fatty acid synthesis and may therefore play a role in governing the total rate of fatty acid production. Possesses both acetoacetyl-ACP synthase and acetyl transacylase activities. Its substrate specificity determines the biosynthesis of branched-chain and/or straight-chain of fatty acids. The polypeptide is Beta-ketoacyl-[acyl-carrier-protein] synthase III (Thiobacillus denitrificans (strain ATCC 25259 / T1)).